We begin with the raw amino-acid sequence, 148 residues long: Transcriptional regulator MraZ (148 aa).

2 SpoVT-AbrB domains span residues 5 to 53 (ETAI…VEKE) and 82 to 125 (SALL…SEQA).

Belongs to the MraZ family. As to quaternary structure, forms oligomers.

The protein localises to the cytoplasm. It localises to the nucleoid. In Xylella fastidiosa (strain Temecula1 / ATCC 700964), this protein is Transcriptional regulator MraZ.